Reading from the N-terminus, the 116-residue chain is Large ribosomal subunit protein uL18 (116 aa).

The protein belongs to the universal ribosomal protein uL18 family. Part of the 50S ribosomal subunit; part of the 5S rRNA/L5/L18/L25 subcomplex. Contacts the 5S and 23S rRNAs.

In terms of biological role, this is one of the proteins that bind and probably mediate the attachment of the 5S RNA into the large ribosomal subunit, where it forms part of the central protuberance. The sequence is that of Large ribosomal subunit protein uL18 from Mycoplasma mycoides subsp. mycoides SC (strain CCUG 32753 / NCTC 10114 / PG1).